Consider the following 395-residue polypeptide: S-adenosylmethionine synthase (395 aa).

An ATP-binding site is contributed by H18. A Mg(2+)-binding site is contributed by D20. Residue E46 participates in K(+) binding. Positions 59 and 103 each coordinate L-methionine. A flexible loop region spans residues 103–113; it reads QSADIAVGVDS. ATP-binding positions include 170 to 172, 235 to 236, D244, 250 to 251, A267, and K271; these read DAK, KF, and RK. L-methionine is bound at residue D244. K275 contributes to the L-methionine binding site.

This sequence belongs to the AdoMet synthase family. Homotetramer; dimer of dimers. Mg(2+) is required as a cofactor. K(+) serves as cofactor.

It is found in the cytoplasm. It catalyses the reaction L-methionine + ATP + H2O = S-adenosyl-L-methionine + phosphate + diphosphate. It participates in amino-acid biosynthesis; S-adenosyl-L-methionine biosynthesis; S-adenosyl-L-methionine from L-methionine: step 1/1. Catalyzes the formation of S-adenosylmethionine (AdoMet) from methionine and ATP. The overall synthetic reaction is composed of two sequential steps, AdoMet formation and the subsequent tripolyphosphate hydrolysis which occurs prior to release of AdoMet from the enzyme. This Granulibacter bethesdensis (strain ATCC BAA-1260 / CGDNIH1) protein is S-adenosylmethionine synthase.